The chain runs to 161 residues: Small ribosomal subunit protein uS19 (161 aa).

Residues 1-19 (MARQKKYSGKGGARKKNKQ) are compositionally biased toward basic residues. The interval 1-26 (MARQKKYSGKGGARKKNKQKQNVAPR) is disordered.

It belongs to the universal ribosomal protein uS19 family.

Functionally, protein S19 forms a complex with S13 that binds strongly to the 16S ribosomal RNA. This is Small ribosomal subunit protein uS19 from Methanococcus maripaludis (strain C5 / ATCC BAA-1333).